A 1358-amino-acid polypeptide reads, in one-letter code: DNA-directed RNA polymerase subunit beta (1358 aa).

This sequence belongs to the RNA polymerase beta chain family. The RNAP catalytic core consists of 2 alpha, 1 beta, 1 beta' and 1 omega subunit. When a sigma factor is associated with the core the holoenzyme is formed, which can initiate transcription.

It catalyses the reaction RNA(n) + a ribonucleoside 5'-triphosphate = RNA(n+1) + diphosphate. Functionally, DNA-dependent RNA polymerase catalyzes the transcription of DNA into RNA using the four ribonucleoside triphosphates as substrates. This is DNA-directed RNA polymerase subunit beta from Neorickettsia sennetsu (strain ATCC VR-367 / Miyayama) (Ehrlichia sennetsu).